A 53-amino-acid polypeptide reads, in one-letter code: uncharacterized protein (53 aa).

This is an uncharacterized protein from Bacillus subtilis (strain 168).